Here is a 1053-residue protein sequence, read N- to C-terminus: Middle cell wall protein (1053 aa).

The N-terminal stretch at Met1 to Ala23 is a signal peptide. SLH domains lie at Glu26–Gln89, Phe90–Trp153, and Pro154–Asp203.

In terms of assembly, the middle cell wall layer is composed of subunits of the middle cell wall protein. These proteins form a hexagonal array with a lattice constant of 14.5 nM in the middle cell wall layers.

Its subcellular location is the secreted. The protein resides in the cell wall. The protein localises to the S-layer. The middle wall protein binds to peptidoglycan and to the outer cell wall protein. The chain is Middle cell wall protein from Brevibacillus brevis (strain 47 / JCM 6285 / NBRC 100599).